Consider the following 380-residue polypeptide: tRNA-specific 2-thiouridylase MnmA (380 aa).

Residues 26–33 and Leu52 each bind ATP; that span reads AMSGGVDS. Cys120 functions as the Nucleophile in the catalytic mechanism. Cys120 and Cys217 are oxidised to a cystine. Position 144 (Gly144) interacts with ATP. Residues 166–168 are interaction with tRNA; the sequence is RDQ. Residue Cys217 is the Cysteine persulfide intermediate of the active site.

The protein belongs to the MnmA/TRMU family.

Its subcellular location is the cytoplasm. The catalysed reaction is S-sulfanyl-L-cysteinyl-[protein] + uridine(34) in tRNA + AH2 + ATP = 2-thiouridine(34) in tRNA + L-cysteinyl-[protein] + A + AMP + diphosphate + H(+). In terms of biological role, catalyzes the 2-thiolation of uridine at the wobble position (U34) of tRNA, leading to the formation of s(2)U34. The polypeptide is tRNA-specific 2-thiouridylase MnmA (Jannaschia sp. (strain CCS1)).